The chain runs to 209 residues: PRA1 family protein B1 (209 aa).

Ala-2 is modified (N-acetylalanine). 5 consecutive transmembrane segments (helical) span residues 73 to 93 (LAYF…FSLF), 95 to 115 (HPLS…LYLF), 133 to 153 (ETLL…SVGS), 154 to 174 (LLTS…AFVV), and 185 to 205 (PANA…AAAV).

It belongs to the PRA1 family. As to quaternary structure, can form homodimer. Interacts with PRA1B2, PRA1B3, PRA1B4, PRA1B5, PRA1B6 and PRA1E.

Its subcellular location is the endosome membrane. Its function is as follows. May be involved in both secretory and endocytic intracellular trafficking in the endosomal/prevacuolar compartments. This chain is PRA1 family protein B1 (PRA1B1), found in Arabidopsis thaliana (Mouse-ear cress).